The following is a 923-amino-acid chain: Probable dipeptidyl-aminopeptidase B (923 aa).

A compositionally biased stretch (basic and acidic residues) spans 1-16; sequence MATEKGHGRDDEERVP. The tract at residues 1 to 21 is disordered; that stretch reads MATEKGHGRDDEERVPLTRGS. Over 1–99 the chain is Cytoplasmic; that stretch reads MATEKGHGRD…KPMHKSVKIA (99 aa). A helical; Signal-anchor for type II membrane protein membrane pass occupies residues 100-120; that stretch reads LWTLLFLSLGGWSLAFVLFIF. Residues 121-923 lie on the Vacuolar side of the membrane; that stretch reads RSHDTYETPI…GLSYNFKHLH (803 aa). 3 N-linked (GlcNAc...) asparagine glycosylation sites follow: asparagine 135, asparagine 351, and asparagine 574. The active-site Charge relay system is serine 756. A glycan (N-linked (GlcNAc...) asparagine) is linked at asparagine 815. Active-site charge relay system residues include aspartate 833 and histidine 866. An N-linked (GlcNAc...) asparagine glycan is attached at asparagine 902.

Belongs to the peptidase S9B family.

The protein localises to the vacuole membrane. The catalysed reaction is Release of an N-terminal dipeptide, Xaa-Yaa-|-Zaa-, from a polypeptide, preferentially when Yaa is Pro, provided Zaa is neither Pro nor hydroxyproline.. Functionally, type IV dipeptidyl-peptidase which removes N-terminal dipeptides sequentially from polypeptides having unsubstituted N-termini provided that the penultimate residue is proline. This is Probable dipeptidyl-aminopeptidase B (DAPB) from Ajellomyces capsulatus (strain G186AR / H82 / ATCC MYA-2454 / RMSCC 2432) (Darling's disease fungus).